The following is a 99-amino-acid chain: Small ribosomal subunit protein bS6 (99 aa).

The protein belongs to the bacterial ribosomal protein bS6 family.

Its function is as follows. Binds together with bS18 to 16S ribosomal RNA. The sequence is that of Small ribosomal subunit protein bS6 from Lactiplantibacillus plantarum (strain ATCC BAA-793 / NCIMB 8826 / WCFS1) (Lactobacillus plantarum).